We begin with the raw amino-acid sequence, 530 residues long: Phosphoenolpyruvate carboxykinase (ATP) (530 aa).

Substrate-binding residues include Arg-58, Tyr-195, and Lys-201. ATP contacts are provided by residues Lys-201, His-220, and 236–244 (GLSGTGKTT). Mn(2+)-binding residues include Lys-201 and His-220. Residue Asp-257 participates in Mn(2+) binding. ATP is bound by residues Glu-285, Arg-321, 440-441 (RI), and Thr-446. Substrate is bound at residue Arg-321.

The protein belongs to the phosphoenolpyruvate carboxykinase (ATP) family. Requires Mn(2+) as cofactor.

Its subcellular location is the cytoplasm. It catalyses the reaction oxaloacetate + ATP = phosphoenolpyruvate + ADP + CO2. It functions in the pathway carbohydrate biosynthesis; gluconeogenesis. Its function is as follows. Involved in the gluconeogenesis. Catalyzes the conversion of oxaloacetate (OAA) to phosphoenolpyruvate (PEP) through direct phosphoryl transfer between the nucleoside triphosphate and OAA. The chain is Phosphoenolpyruvate carboxykinase (ATP) from Staphylococcus aureus (strain MRSA252).